Reading from the N-terminus, the 208-residue chain is dITP/XTP pyrophosphatase (208 aa).

11–16 provides a ligand contact to substrate; the sequence is SRNWKK. Residue D76 is the Proton acceptor of the active site. Position 76 (D76) interacts with Mg(2+). Residues S77, 158–161, K184, and 189–190 contribute to the substrate site; these read FGYD and HR.

Belongs to the HAM1 NTPase family. In terms of assembly, homodimer. The cofactor is Mg(2+).

It catalyses the reaction XTP + H2O = XMP + diphosphate + H(+). The catalysed reaction is dITP + H2O = dIMP + diphosphate + H(+). It carries out the reaction ITP + H2O = IMP + diphosphate + H(+). In terms of biological role, pyrophosphatase that catalyzes the hydrolysis of nucleoside triphosphates to their monophosphate derivatives, with a high preference for the non-canonical purine nucleotides XTP (xanthosine triphosphate), dITP (deoxyinosine triphosphate) and ITP. Seems to function as a house-cleaning enzyme that removes non-canonical purine nucleotides from the nucleotide pool, thus preventing their incorporation into DNA/RNA and avoiding chromosomal lesions. This chain is dITP/XTP pyrophosphatase, found in Mycobacterium leprae (strain TN).